Reading from the N-terminus, the 293-residue chain is Immediate early response gene 5-like protein (293 aa).

It belongs to the IER family.

The chain is Immediate early response gene 5-like protein (ier5l) from Xenopus laevis (African clawed frog).